Reading from the N-terminus, the 122-residue chain is Large ribosomal subunit protein uL14 (122 aa).

It belongs to the universal ribosomal protein uL14 family. As to quaternary structure, part of the 50S ribosomal subunit. Forms a cluster with proteins L3 and L19. In the 70S ribosome, L14 and L19 interact and together make contacts with the 16S rRNA in bridges B5 and B8.

Functionally, binds to 23S rRNA. Forms part of two intersubunit bridges in the 70S ribosome. This Streptococcus suis (strain 05ZYH33) protein is Large ribosomal subunit protein uL14.